Here is a 341-residue protein sequence, read N- to C-terminus: Elongation factor Ts (341 aa).

The segment at 80 to 83 is involved in Mg(2+) ion dislocation from EF-Tu; the sequence is TDFV.

It belongs to the EF-Ts family.

It localises to the cytoplasm. Functionally, associates with the EF-Tu.GDP complex and induces the exchange of GDP to GTP. It remains bound to the aminoacyl-tRNA.EF-Tu.GTP complex up to the GTP hydrolysis stage on the ribosome. This Lactobacillus acidophilus (strain ATCC 700396 / NCK56 / N2 / NCFM) protein is Elongation factor Ts.